The primary structure comprises 454 residues: tRNA modification GTPase MnmE (454 aa).

3 residues coordinate (6S)-5-formyl-5,6,7,8-tetrahydrofolate: arginine 23, glutamate 80, and lysine 120. In terms of domain architecture, TrmE-type G spans 216 to 377; it reads GMKVVIAGRP…LRDHLKSSMG (162 aa). Asparagine 226 is a binding site for K(+). Residues 226–231, 245–251, 270–273, 335–338, and 358–360 each bind GTP; these read NAGKSS, TDIAGTT, DTAG, NKAD, and SAR. Residue serine 230 coordinates Mg(2+). Threonine 245, isoleucine 247, and threonine 250 together coordinate K(+). Threonine 251 provides a ligand contact to Mg(2+). Lysine 454 is a binding site for (6S)-5-formyl-5,6,7,8-tetrahydrofolate.

It belongs to the TRAFAC class TrmE-Era-EngA-EngB-Septin-like GTPase superfamily. TrmE GTPase family. Homodimer. Heterotetramer of two MnmE and two MnmG subunits. K(+) is required as a cofactor.

The protein localises to the cytoplasm. In terms of biological role, exhibits a very high intrinsic GTPase hydrolysis rate. Involved in the addition of a carboxymethylaminomethyl (cmnm) group at the wobble position (U34) of certain tRNAs, forming tRNA-cmnm(5)s(2)U34. The sequence is that of tRNA modification GTPase MnmE from Erwinia tasmaniensis (strain DSM 17950 / CFBP 7177 / CIP 109463 / NCPPB 4357 / Et1/99).